Here is a 396-residue protein sequence, read N- to C-terminus: Putative amidohydrolase YhaA (396 aa).

Aspartate 85 is a catalytic residue. The active-site Proton acceptor is glutamate 143. Positions 144, 182, and 368 each coordinate Zn(2+).

This sequence belongs to the peptidase M20A family. It depends on Zn(2+) as a cofactor. Requires Co(2+) as cofactor.

This Bacillus subtilis (strain 168) protein is Putative amidohydrolase YhaA (yhaA).